The chain runs to 528 residues: DNA primase large subunit (528 aa).

The interval 210–239 is H-T-H-like motif; the sequence is NEEHQRKQYFQQEKFIKLPFENVIELVGNR. C336, C417, C434, and C474 together coordinate [4Fe-4S] cluster.

This sequence belongs to the eukaryotic-type primase large subunit family. In terms of assembly, DNA polymerase alpha:primase is a four subunit enzyme complex, which is assembled throughout the cell cycle, and consists of the two DNA polymerase subunits A POL1 and B POL12, and the DNA primase large PRI2 and small PRI1 subunits. Interacts with MCM10. It depends on [4Fe-4S] cluster as a cofactor.

Functionally, DNA primase is the polymerase that synthesizes small RNA primers for the Okazaki fragments made during discontinuous DNA replication. In a complex with DNA polymerase alpha (DNA polymerase alpha:primase) constitutes a replicative polymerase. Both primase components participate in formation of the active center, but the ATP-binding site is exclusively located on p48. The sequence is that of DNA primase large subunit (PRI2) from Saccharomyces cerevisiae (strain ATCC 204508 / S288c) (Baker's yeast).